A 381-amino-acid chain; its full sequence is Cytosolic acyl coenzyme A thioester hydrolase (381 aa).

Residues 51–169 (LGHCVTMGRI…TLWYVPLSLK (119 aa)) enclose the HotDog ACOT-type 1 domain. Asparagine 67 is a catalytic residue. N6-acetyllysine is present on residues lysine 169 and lysine 199. The HotDog ACOT-type 2 domain maps to 225-339 (SYSQSSLIHL…FFTYVSLNQE (115 aa)). Aspartate 256 is an active-site residue. Lysine 284 carries the post-translational modification N6-acetyllysine. The segment at 342 to 381 (PMPVPQLVPETEDEKKRFEEGKGRYLQMKAKRQGHTEPQP) is disordered. Residues 354 to 364 (DEKKRFEEGKG) show a composition bias toward basic and acidic residues.

Homohexamer. As to expression, widely expressed with highest levels in brain. High levels also found in thymus, large intestine and testis. Negligible in muscle and adipose tissue. In the central and peripheral nervous systems, displays a predominantly neuronal localization with highest expression in cell bodies and neurites.

The protein resides in the cytoplasm. It is found in the cytosol. The enzyme catalyses hexadecanoyl-CoA + H2O = hexadecanoate + CoA + H(+). It carries out the reaction dodecanoyl-CoA + H2O = dodecanoate + CoA + H(+). It catalyses the reaction tetradecanoyl-CoA + H2O = tetradecanoate + CoA + H(+). The catalysed reaction is decanoyl-CoA + H2O = decanoate + CoA + H(+). The enzyme catalyses octanoyl-CoA + H2O = octanoate + CoA + H(+). It carries out the reaction octadecanoyl-CoA + H2O = octadecanoate + CoA + H(+). It catalyses the reaction (9Z)-octadecenoyl-CoA + H2O = (9Z)-octadecenoate + CoA + H(+). Its pathway is lipid metabolism; fatty acid metabolism. In terms of biological role, catalyzes the hydrolysis of acyl-CoAs into free fatty acids and coenzyme A (CoASH), regulating their respective intracellular levels. Preferentially hydrolyzes palmitoyl-CoA, but has a broad specificity acting on other fatty acyl-CoAs with chain-lengths of C8-C18. May play an important physiological function in brain. In Mus musculus (Mouse), this protein is Cytosolic acyl coenzyme A thioester hydrolase (Acot7).